Here is a 120-residue protein sequence, read N- to C-terminus: MFLLYEYDIFWVFLIISSVIPILAFLISGVLAPLSKEPEKLSSYESGIEPMGDAWVQFRIRYYMFALVFVVFDVETVFLYPWAMSFDVLGVSVFIEALIFVLILIVGLVYAWRKGALEWS.

Transmembrane regions (helical) follow at residues 9-29, 64-84, and 88-108; these read IFWV…LISG, MFAL…PWAM, and VLGV…IVGL.

This sequence belongs to the complex I subunit 3 family. In terms of assembly, NDH is composed of at least 16 different subunits, 5 of which are encoded in the nucleus.

The protein localises to the plastid. It is found in the chloroplast thylakoid membrane. It catalyses the reaction a plastoquinone + NADH + (n+1) H(+)(in) = a plastoquinol + NAD(+) + n H(+)(out). It carries out the reaction a plastoquinone + NADPH + (n+1) H(+)(in) = a plastoquinol + NADP(+) + n H(+)(out). NDH shuttles electrons from NAD(P)H:plastoquinone, via FMN and iron-sulfur (Fe-S) centers, to quinones in the photosynthetic chain and possibly in a chloroplast respiratory chain. The immediate electron acceptor for the enzyme in this species is believed to be plastoquinone. Couples the redox reaction to proton translocation, and thus conserves the redox energy in a proton gradient. The sequence is that of NAD(P)H-quinone oxidoreductase subunit 3, chloroplastic from Cucumis sativus (Cucumber).